The primary structure comprises 221 residues: Probable chemoreceptor glutamine deamidase CheD 1 (221 aa).

It belongs to the CheD family.

It catalyses the reaction L-glutaminyl-[protein] + H2O = L-glutamyl-[protein] + NH4(+). In terms of biological role, probably deamidates glutamine residues to glutamate on methyl-accepting chemotaxis receptors (MCPs), playing an important role in chemotaxis. The sequence is that of Probable chemoreceptor glutamine deamidase CheD 1 from Methanosarcina mazei (strain ATCC BAA-159 / DSM 3647 / Goe1 / Go1 / JCM 11833 / OCM 88) (Methanosarcina frisia).